Consider the following 210-residue polypeptide: Holliday junction resolvase RecU (210 aa).

4 residues coordinate Mg(2+): Thr-87, Asp-89, Glu-102, and Gln-121.

This sequence belongs to the RecU family. It depends on Mg(2+) as a cofactor.

Its subcellular location is the cytoplasm. The catalysed reaction is Endonucleolytic cleavage at a junction such as a reciprocal single-stranded crossover between two homologous DNA duplexes (Holliday junction).. Endonuclease that resolves Holliday junction intermediates in genetic recombination. Cleaves mobile four-strand junctions by introducing symmetrical nicks in paired strands. Promotes annealing of linear ssDNA with homologous dsDNA. Required for DNA repair, homologous recombination and chromosome segregation. This is Holliday junction resolvase RecU from Lactobacillus delbrueckii subsp. bulgaricus (strain ATCC 11842 / DSM 20081 / BCRC 10696 / JCM 1002 / NBRC 13953 / NCIMB 11778 / NCTC 12712 / WDCM 00102 / Lb 14).